A 40-amino-acid chain; its full sequence is Photosystem II reaction center protein J (40 aa).

A helical membrane pass occupies residues 8–28 (IPLWLVGTVTGTLVIGLMGIF).

Belongs to the PsbJ family. In terms of assembly, PSII is composed of 1 copy each of membrane proteins PsbA, PsbB, PsbC, PsbD, PsbE, PsbF, PsbH, PsbI, PsbJ, PsbK, PsbL, PsbM, PsbT, PsbX, PsbY, PsbZ, Psb30/Ycf12, at least 3 peripheral proteins of the oxygen-evolving complex and a large number of cofactors. It forms dimeric complexes.

The protein resides in the plastid. The protein localises to the chloroplast thylakoid membrane. One of the components of the core complex of photosystem II (PSII). PSII is a light-driven water:plastoquinone oxidoreductase that uses light energy to abstract electrons from H(2)O, generating O(2) and a proton gradient subsequently used for ATP formation. It consists of a core antenna complex that captures photons, and an electron transfer chain that converts photonic excitation into a charge separation. In Psilotum nudum (Whisk fern), this protein is Photosystem II reaction center protein J.